Reading from the N-terminus, the 258-residue chain is Na(+)-translocating NADH-quinone reductase subunit C (258 aa).

A helical transmembrane segment spans residues 14-34; the sequence is LIVVLAVSLICSVIVAGAVVG. At serine 226 the chain carries FMN phosphoryl serine.

Belongs to the NqrC family. Composed of six subunits; NqrA, NqrB, NqrC, NqrD, NqrE and NqrF. FMN serves as cofactor.

Its subcellular location is the cell inner membrane. The enzyme catalyses a ubiquinone + n Na(+)(in) + NADH + H(+) = a ubiquinol + n Na(+)(out) + NAD(+). Its function is as follows. NQR complex catalyzes the reduction of ubiquinone-1 to ubiquinol by two successive reactions, coupled with the transport of Na(+) ions from the cytoplasm to the periplasm. NqrA to NqrE are probably involved in the second step, the conversion of ubisemiquinone to ubiquinol. The protein is Na(+)-translocating NADH-quinone reductase subunit C of Neisseria meningitidis serogroup B (strain ATCC BAA-335 / MC58).